The following is a 155-amino-acid chain: 2-C-methyl-D-erythritol 2,4-cyclodiphosphate synthase (155 aa).

A divalent metal cation contacts are provided by Asp8 and His10. Residues 8–10 (DVH) and 34–35 (HS) contribute to the 4-CDP-2-C-methyl-D-erythritol 2-phosphate site. A divalent metal cation is bound at residue His42. Residues 56–58 (DIG), 61–65 (FPDSD), 132–135 (TTEE), Phe139, and Arg142 contribute to the 4-CDP-2-C-methyl-D-erythritol 2-phosphate site.

It belongs to the IspF family. Homotrimer. It depends on a divalent metal cation as a cofactor.

It catalyses the reaction 4-CDP-2-C-methyl-D-erythritol 2-phosphate = 2-C-methyl-D-erythritol 2,4-cyclic diphosphate + CMP. Its pathway is isoprenoid biosynthesis; isopentenyl diphosphate biosynthesis via DXP pathway; isopentenyl diphosphate from 1-deoxy-D-xylulose 5-phosphate: step 4/6. In terms of biological role, involved in the biosynthesis of isopentenyl diphosphate (IPP) and dimethylallyl diphosphate (DMAPP), two major building blocks of isoprenoid compounds. Catalyzes the conversion of 4-diphosphocytidyl-2-C-methyl-D-erythritol 2-phosphate (CDP-ME2P) to 2-C-methyl-D-erythritol 2,4-cyclodiphosphate (ME-CPP) with a corresponding release of cytidine 5-monophosphate (CMP). In Clostridium acetobutylicum (strain ATCC 824 / DSM 792 / JCM 1419 / IAM 19013 / LMG 5710 / NBRC 13948 / NRRL B-527 / VKM B-1787 / 2291 / W), this protein is 2-C-methyl-D-erythritol 2,4-cyclodiphosphate synthase.